Here is a 362-residue protein sequence, read N- to C-terminus: Spermidine/putrescine import ATP-binding protein PotA (362 aa).

The ABC transporter domain maps to 4 to 235; it reads IKLDHITKQY…PVNDFVARFI (232 aa). ATP is bound at residue 37 to 44; the sequence is GPSGSGKT.

The protein belongs to the ABC transporter superfamily. Spermidine/putrescine importer (TC 3.A.1.11.1) family. The complex is composed of two ATP-binding proteins (PotA), two transmembrane proteins (PotB and PotC) and a solute-binding protein (PotD).

It is found in the cell membrane. It carries out the reaction ATP + H2O + polyamine-[polyamine-binding protein]Side 1 = ADP + phosphate + polyamineSide 2 + [polyamine-binding protein]Side 1.. Its function is as follows. Part of the ABC transporter complex PotABCD involved in spermidine/putrescine import. Responsible for energy coupling to the transport system. This is Spermidine/putrescine import ATP-binding protein PotA from Lactobacillus delbrueckii subsp. bulgaricus (strain ATCC 11842 / DSM 20081 / BCRC 10696 / JCM 1002 / NBRC 13953 / NCIMB 11778 / NCTC 12712 / WDCM 00102 / Lb 14).